A 478-amino-acid polypeptide reads, in one-letter code: Protein nucleotidyltransferase YdiU (478 aa).

Residues Gly84, Gly86, Arg87, Lys107, Asp119, Gly120, Arg170, and Arg177 each contribute to the ATP site. Asp246 serves as the catalytic Proton acceptor. Residues Asn247 and Asp256 each contribute to the Mg(2+) site. Asp256 is an ATP binding site.

Belongs to the SELO family. The cofactor is Mg(2+). Mn(2+) is required as a cofactor.

The catalysed reaction is L-seryl-[protein] + ATP = 3-O-(5'-adenylyl)-L-seryl-[protein] + diphosphate. It catalyses the reaction L-threonyl-[protein] + ATP = 3-O-(5'-adenylyl)-L-threonyl-[protein] + diphosphate. It carries out the reaction L-tyrosyl-[protein] + ATP = O-(5'-adenylyl)-L-tyrosyl-[protein] + diphosphate. The enzyme catalyses L-histidyl-[protein] + UTP = N(tele)-(5'-uridylyl)-L-histidyl-[protein] + diphosphate. The catalysed reaction is L-seryl-[protein] + UTP = O-(5'-uridylyl)-L-seryl-[protein] + diphosphate. It catalyses the reaction L-tyrosyl-[protein] + UTP = O-(5'-uridylyl)-L-tyrosyl-[protein] + diphosphate. Functionally, nucleotidyltransferase involved in the post-translational modification of proteins. It can catalyze the addition of adenosine monophosphate (AMP) or uridine monophosphate (UMP) to a protein, resulting in modifications known as AMPylation and UMPylation. The sequence is that of Protein nucleotidyltransferase YdiU from Shigella sonnei (strain Ss046).